We begin with the raw amino-acid sequence, 247 residues long: ATP synthase subunit a, chloroplastic (247 aa).

Transmembrane regions (helical) follow at residues 36 to 56, 95 to 115, 134 to 154, 199 to 219, and 220 to 240; these read GQVL…SIFG, VPFI…GALV, INTT…AGFS, LVVG…LMLL, and GLFT…AYIG.

The protein belongs to the ATPase A chain family. In terms of assembly, F-type ATPases have 2 components, CF(1) - the catalytic core - and CF(0) - the membrane proton channel. CF(1) has five subunits: alpha(3), beta(3), gamma(1), delta(1), epsilon(1). CF(0) has four main subunits: a, b, b' and c.

The protein resides in the plastid. Its subcellular location is the chloroplast thylakoid membrane. Its function is as follows. Key component of the proton channel; it plays a direct role in the translocation of protons across the membrane. In Mesostigma viride (Green alga), this protein is ATP synthase subunit a, chloroplastic.